A 297-amino-acid chain; its full sequence is MEIGLREWLILIGIIVIAGILFDGWRRMRGGKGKLKFRLDRSYSNLPDEEGGSAEVLGPSRVLDTHKEPELDESDLPSLSASARDREREPKPVKASKRGKRVSAAADVQQGDLNLSAEQREPDLFADSDDDFAADNNRSSGAAPASSSVKELPPAEEVLVISVISRDEGGFKGPALLQNILESGLRFGEMDIFHRHESMAGHGEVLFSMANAVKPGVFDLDDIDHFSTRAVSFFLGLPGPRHPKQAFDVMVAAARKLAHELNGELKDDQRSVLTAQTIEHYRQRIVEFERRALTQKR.

M1 is a topological domain (periplasmic). The chain crosses the membrane as a helical span at residues 2–22 (EIGLREWLILIGIIVIAGILF). Residues 23–297 (DGWRRMRGGK…FERRALTQKR (275 aa)) are Cytoplasmic-facing. Residues 48 to 150 (DEEGGSAEVL…GAAPASSSVK (103 aa)) form a disordered region. Basic and acidic residues predominate over residues 83 to 92 (ARDREREPKP). The segment covering 124-133 (LFADSDDDFA) has biased composition (acidic residues). The segment covering 136–149 (NNRSSGAAPASSSV) has biased composition (polar residues).

It belongs to the ZipA family. In terms of assembly, interacts with FtsZ via their C-terminal domains.

The protein resides in the cell inner membrane. In terms of biological role, essential cell division protein that stabilizes the FtsZ protofilaments by cross-linking them and that serves as a cytoplasmic membrane anchor for the Z ring. Also required for the recruitment to the septal ring of downstream cell division proteins. The sequence is that of Cell division protein ZipA from Pseudomonas putida (strain ATCC 700007 / DSM 6899 / JCM 31910 / BCRC 17059 / LMG 24140 / F1).